A 429-amino-acid polypeptide reads, in one-letter code: Lysophosphatidic acid phosphatase type 6 (429 aa).

A mitochondrion-targeting transit peptide spans 1–32 (MISRVFKLRMWAPVGVLTSLTYCLHQRRVALA). Positions 58–169 (RHGARSPLKP…VFIRSTNIYR (112 aa)) are substrate binding. Histidine 59 serves as the catalytic Nucleophile. Aspartate 336 serves as the catalytic Proton donor.

It belongs to the histidine acid phosphatase family. As to quaternary structure, monomer. In terms of tissue distribution, detected in brain (at protein level).

It localises to the mitochondrion. It carries out the reaction a phosphate monoester + H2O = an alcohol + phosphate. The catalysed reaction is 1-(9Z-octadecenoyl)-sn-glycero-3-phosphate + H2O = 1-(9Z-octadecenoyl)-sn-glycerol + phosphate. In terms of biological role, hydrolyzes lysophosphatidic acid (LPA) containing a medium length fatty acid chain to the corresponding monoacylglycerol. Has highest activity with lysophosphatidic acid containing myristate (C14:0), monounsaturated oleate (C18:1) or palmitate (C16:0), and lower activity with C18:0 and C6:0 lysophosphatidic acid. In Bos taurus (Bovine), this protein is Lysophosphatidic acid phosphatase type 6 (ACP6).